A 228-amino-acid chain; its full sequence is Biosynthetic peptidoglycan transglycosylase (228 aa).

The helical transmembrane segment at 8–28 (ILAALVAAFLLYNLWVLGHII) threads the bilayer.

Belongs to the glycosyltransferase 51 family.

The protein resides in the cell inner membrane. The catalysed reaction is [GlcNAc-(1-&gt;4)-Mur2Ac(oyl-L-Ala-gamma-D-Glu-L-Lys-D-Ala-D-Ala)](n)-di-trans,octa-cis-undecaprenyl diphosphate + beta-D-GlcNAc-(1-&gt;4)-Mur2Ac(oyl-L-Ala-gamma-D-Glu-L-Lys-D-Ala-D-Ala)-di-trans,octa-cis-undecaprenyl diphosphate = [GlcNAc-(1-&gt;4)-Mur2Ac(oyl-L-Ala-gamma-D-Glu-L-Lys-D-Ala-D-Ala)](n+1)-di-trans,octa-cis-undecaprenyl diphosphate + di-trans,octa-cis-undecaprenyl diphosphate + H(+). It functions in the pathway cell wall biogenesis; peptidoglycan biosynthesis. Functionally, peptidoglycan polymerase that catalyzes glycan chain elongation from lipid-linked precursors. This is Biosynthetic peptidoglycan transglycosylase from Chromobacterium violaceum (strain ATCC 12472 / DSM 30191 / JCM 1249 / CCUG 213 / NBRC 12614 / NCIMB 9131 / NCTC 9757 / MK).